The sequence spans 366 residues: Outer membrane protein IIIA (366 aa).

The N-terminal stretch at 1-22 is a signal peptide; it reads MNIRMVLLASAAAFAASTPVLA.

The protein belongs to the alphaproteobacteria porin family. As to quaternary structure, forms calcium-stabilized oligomers. Post-translationally, attached covalently to peptidoglycan.

It is found in the cell outer membrane. Its function is as follows. May act as an outer membrane pore. The polypeptide is Outer membrane protein IIIA (ropA) (Rhizobium leguminosarum bv. viciae).